The sequence spans 204 residues: Pyridoxamine 5'-phosphate oxidase YLR456W homolog (204 aa).

Residues 65–66 (FT) and Asn-127 each bind FMN.

Belongs to the pyridoxamine 5'-phosphate oxidase family. Requires FMN as cofactor.

The protein resides in the cytoplasm. The protein localises to the nucleus. The chain is Pyridoxamine 5'-phosphate oxidase YLR456W homolog from Saccharomyces cerevisiae (strain ATCC 204508 / S288c) (Baker's yeast).